The primary structure comprises 230 residues: Uracil-DNA glycosylase (230 aa).

The active-site Proton acceptor is Asp-65.

This sequence belongs to the uracil-DNA glycosylase (UDG) superfamily. UNG family.

The protein resides in the cytoplasm. The enzyme catalyses Hydrolyzes single-stranded DNA or mismatched double-stranded DNA and polynucleotides, releasing free uracil.. Its function is as follows. Excises uracil residues from the DNA which can arise as a result of misincorporation of dUMP residues by DNA polymerase or due to deamination of cytosine. This chain is Uracil-DNA glycosylase, found in Pediococcus pentosaceus (strain ATCC 25745 / CCUG 21536 / LMG 10740 / 183-1w).